The chain runs to 250 residues: 26 kDa periplasmic immunogenic protein (250 aa).

Positions 1–28 are cleaved as a signal peptide; that stretch reads MNTRASNFLAASFSTIMLVGAFSLPAFA.

The protein localises to the periplasm. The polypeptide is 26 kDa periplasmic immunogenic protein (bp26) (Brucella abortus (strain S19)).